A 401-amino-acid polypeptide reads, in one-letter code: ATP phosphoribosyltransferase regulatory subunit (401 aa).

Positions 373–401 (PGQQGGAAAQGCDRRLQQDDGGGWVTRPL) are disordered. Over residues 392-401 (DGGGWVTRPL) the composition is skewed to gly residues.

This sequence belongs to the class-II aminoacyl-tRNA synthetase family. HisZ subfamily. Heteromultimer composed of HisG and HisZ subunits.

It is found in the cytoplasm. Its pathway is amino-acid biosynthesis; L-histidine biosynthesis; L-histidine from 5-phospho-alpha-D-ribose 1-diphosphate: step 1/9. Required for the first step of histidine biosynthesis. May allow the feedback regulation of ATP phosphoribosyltransferase activity by histidine. This Alkalilimnicola ehrlichii (strain ATCC BAA-1101 / DSM 17681 / MLHE-1) protein is ATP phosphoribosyltransferase regulatory subunit.